The chain runs to 185 residues: Ribosome-recycling factor (185 aa).

It belongs to the RRF family.

The protein localises to the cytoplasm. Its function is as follows. Responsible for the release of ribosomes from messenger RNA at the termination of protein biosynthesis. May increase the efficiency of translation by recycling ribosomes from one round of translation to another. The polypeptide is Ribosome-recycling factor (Pseudomonas putida (strain W619)).